A 385-amino-acid polypeptide reads, in one-letter code: Di-N-acetylchitobiase (385 aa).

The signal sequence occupies residues 1-38 (MSRPQLRRWRLVSSPPSGVPGLALLALLALLALRLAAG). Residues 39-385 (TDCPCPEPEL…EVLKPKLLQR (347 aa)) form the GH18 domain. Glu143 functions as the Proton donor in the catalytic mechanism. N-linked (GlcNAc...) asparagine glycans are attached at residues Asn193, Asn228, Asn262, and Asn299.

This sequence belongs to the glycosyl hydrolase 18 family.

Its subcellular location is the lysosome. In terms of biological role, involved in the degradation of asparagine-linked glycoproteins. Hydrolyze of N-acetyl-beta-D-glucosamine (1-4)N-acetylglucosamine chitobiose core from the reducing end of the bond, it requires prior cleavage by glycosylasparaginase. The sequence is that of Di-N-acetylchitobiase (CTBS) from Homo sapiens (Human).